We begin with the raw amino-acid sequence, 122 residues long: Small ribosomal subunit protein uS13 (122 aa).

Residues 95-116 (GLPVRGQKTKTNARTRKGRRKT) show a composition bias toward basic residues. Residues 95–122 (GLPVRGQKTKTNARTRKGRRKTVGAATK) form a disordered region.

This sequence belongs to the universal ribosomal protein uS13 family. Part of the 30S ribosomal subunit. Forms a loose heterodimer with protein S19. Forms two bridges to the 50S subunit in the 70S ribosome.

Functionally, located at the top of the head of the 30S subunit, it contacts several helices of the 16S rRNA. In the 70S ribosome it contacts the 23S rRNA (bridge B1a) and protein L5 of the 50S subunit (bridge B1b), connecting the 2 subunits; these bridges are implicated in subunit movement. Contacts the tRNAs in the A and P-sites. This Campylobacter concisus (strain 13826) protein is Small ribosomal subunit protein uS13.